The following is a 250-amino-acid chain: Aquaporin TIP2-3 (250 aa).

An N-acetylmethionine modification is found at M1. Over 1–24 the chain is Cytoplasmic; the sequence is MVKIEVGSVGDSFSVSSLKAYLSE. At K3 the chain carries N6,N6-dimethyllysine. A helical transmembrane segment spans residues 25-45; it reads FIATLLFVFAGVGSAVAFAKL. Over 46-54 the chain is Vacuolar; that stretch reads TSDGALDPA. Residues 55–75 traverse the membrane as a helical segment; it reads GLVAIAIAHAFALFVGVSIAA. At 76-101 the chain is on the cytoplasmic side; it reads NISGGHLNPAVTLGLAIGGNITLITG. Residues 83–85 carry the NPA 1 motif; sequence NPA. Residues 102-122 traverse the membrane as a helical segment; that stretch reads FFYWIAQCLGSIVACLLLVFV. The Vacuolar segment spans residues 123–134; the sequence is TNGKSVPTHGVS. A helical membrane pass occupies residues 135–155; the sequence is AGLGAVEGVVMEIVVTFALVY. The Cytoplasmic portion of the chain corresponds to 156–168; sequence TVYATAADPKKGS. The helical transmembrane segment at 169–189 threads the bilayer; it reads LGTIAPIAIGFIVGANILAAG. The Vacuolar portion of the chain corresponds to 190 to 217; it reads PFSGGSMNPARSFGPAVVSGDLSQIWIY. The NPA 2 motif lies at 197–199; that stretch reads NPA. Residues 218–238 form a helical membrane-spanning segment; the sequence is WVGPLVGGALAGLIYGDVFIG. Residues 239 to 250 lie on the Cytoplasmic side of the membrane; the sequence is SYEAVETREIRV.

The protein belongs to the MIP/aquaporin (TC 1.A.8) family. TIP (TC 1.A.8.10) subfamily. In terms of assembly, interacts with cucumber mosaic virus (CMV) Protein 1a. Widely expressed.

Its subcellular location is the vacuole membrane. Its function is as follows. Transports methylammonium or ammonium in yeast cells, preferentially at high medium pH. May participate in vacuolar compartmentation and detoxification of ammonium. The protein is Aquaporin TIP2-3 (TIP2-3) of Arabidopsis thaliana (Mouse-ear cress).